The primary structure comprises 286 residues: 2,3,4,5-tetrahydropyridine-2,6-dicarboxylate N-succinyltransferase (286 aa).

Belongs to the transferase hexapeptide repeat family.

The protein resides in the cytoplasm. The enzyme catalyses (S)-2,3,4,5-tetrahydrodipicolinate + succinyl-CoA + H2O = (S)-2-succinylamino-6-oxoheptanedioate + CoA. It functions in the pathway amino-acid biosynthesis; L-lysine biosynthesis via DAP pathway; LL-2,6-diaminopimelate from (S)-tetrahydrodipicolinate (succinylase route): step 1/3. This chain is 2,3,4,5-tetrahydropyridine-2,6-dicarboxylate N-succinyltransferase, found in Rhizobium leguminosarum bv. trifolii (strain WSM2304).